A 172-amino-acid chain; its full sequence is Translation initiation factor IF-3 (172 aa).

This sequence belongs to the IF-3 family. As to quaternary structure, monomer.

Its subcellular location is the cytoplasm. Functionally, IF-3 binds to the 30S ribosomal subunit and shifts the equilibrium between 70S ribosomes and their 50S and 30S subunits in favor of the free subunits, thus enhancing the availability of 30S subunits on which protein synthesis initiation begins. The protein is Translation initiation factor IF-3 of Campylobacter fetus subsp. fetus (strain 82-40).